Consider the following 369-residue polypeptide: 4-hydroxy-3-methylbut-2-en-1-yl diphosphate synthase (flavodoxin) (369 aa).

[4Fe-4S] cluster contacts are provided by Cys-270, Cys-273, Cys-305, and Glu-312.

The protein belongs to the IspG family. [4Fe-4S] cluster serves as cofactor.

The catalysed reaction is (2E)-4-hydroxy-3-methylbut-2-enyl diphosphate + oxidized [flavodoxin] + H2O + 2 H(+) = 2-C-methyl-D-erythritol 2,4-cyclic diphosphate + reduced [flavodoxin]. It functions in the pathway isoprenoid biosynthesis; isopentenyl diphosphate biosynthesis via DXP pathway; isopentenyl diphosphate from 1-deoxy-D-xylulose 5-phosphate: step 5/6. Functionally, converts 2C-methyl-D-erythritol 2,4-cyclodiphosphate (ME-2,4cPP) into 1-hydroxy-2-methyl-2-(E)-butenyl 4-diphosphate. This is 4-hydroxy-3-methylbut-2-en-1-yl diphosphate synthase (flavodoxin) from Psychromonas ingrahamii (strain DSM 17664 / CCUG 51855 / 37).